The chain runs to 93 residues: Large ribosomal subunit protein bL27 (93 aa).

The tract at residues 1-22 (MAHKKAGGSSRNGRDSAGRRLG) is disordered.

This sequence belongs to the bacterial ribosomal protein bL27 family.

This is Large ribosomal subunit protein bL27 from Parvibaculum lavamentivorans (strain DS-1 / DSM 13023 / NCIMB 13966).